A 391-amino-acid polypeptide reads, in one-letter code: 3-ketoacyl-CoA thiolase (391 aa).

The active-site Acyl-thioester intermediate is the C95. Active-site proton acceptor residues include H347 and C377.

Belongs to the thiolase-like superfamily. Thiolase family. As to quaternary structure, heterotetramer of two alpha chains (FadB) and two beta chains (FadA).

Its subcellular location is the cytoplasm. It catalyses the reaction an acyl-CoA + acetyl-CoA = a 3-oxoacyl-CoA + CoA. It participates in lipid metabolism; fatty acid beta-oxidation. Its function is as follows. Catalyzes the final step of fatty acid oxidation in which acetyl-CoA is released and the CoA ester of a fatty acid two carbons shorter is formed. This is 3-ketoacyl-CoA thiolase from Pseudomonas syringae pv. syringae (strain B728a).